The chain runs to 509 residues: Phosphoglycerate kinase, glycosomal (509 aa).

Residues Val32, Asp33, Phe34, Asn35, Arg48, Ser70, His71, Gly73, Arg74, Arg224, His260, and Arg261 each coordinate (2R)-3-phosphoglycerate. ADP is bound at residue Gly306. CDP is bound at residue Gly306. A (2R)-3-phosphoglycerate-binding site is contributed by Lys308. An AMP-binding site is contributed by Lys308. Asp311 contacts CDP. Asp311 lines the Mg(2+) pocket. 2 residues coordinate ADP: Lys312 and Gly330. Lys312 contacts AMP. An ATP-binding site is contributed by Lys312. Gly330 contacts CDP. AMP is bound by residues Ala331 and Ala403. The ATP site is built by Ala331 and Ala403. Residues Ala403 and Asn427 each coordinate ADP. The CDP site is built by Gly428 and Phe433. The ADP site is built by Phe433, Glu434, Asp466, and Ser467. Glu434 contacts AMP. 3 residues coordinate ATP: Glu434, Asp466, and Ser467. Asp466 is a Mg(2+) binding site.

It belongs to the phosphoglycerate kinase family. Monomer. The cofactor is Mg(2+).

It localises to the glycosome. It catalyses the reaction (2R)-3-phosphoglycerate + ATP = (2R)-3-phospho-glyceroyl phosphate + ADP. Its pathway is carbohydrate degradation; glycolysis; pyruvate from D-glyceraldehyde 3-phosphate: step 2/5. This chain is Phosphoglycerate kinase, glycosomal (56PGK), found in Trypanosoma congolense.